Consider the following 1002-residue polypeptide: yemanuclein (1002 aa).

The Nuclear localization signal signature appears at 80-85; it reads KKKTKK. Disordered regions lie at residues 193 to 358, 395 to 428, and 642 to 725; these read AIIK…KKVV, VSTD…GQEN, and KLKA…AKQV. The span at 207–217 shows a compositional bias: low complexity; the sequence is SSSSESSSSSS. The span at 218–262 shows a compositional bias: acidic residues; the sequence is GDDDENDDGNNEEDDESDSEDDSEENDESDSEDDSESESLEDEDS. 2 consecutive repeat copies span residues 230–241 and 242–253. The segment at 230–253 is 2 X 12 AA tandem repeats; sequence EDDESDSEDDSEENDESDSEDDSE. 3 stretches are compositionally biased toward low complexity: residues 286–320, 336–358, and 395–404; these read TGKS…RPST, QPSS…KKVV, and VSTDVSSSDS. The segment covering 408–427 has biased composition (basic and acidic residues); that stretch reads ESEHGRADRQAGQHGKDGQE. Residues 653 to 667 are compositionally biased toward low complexity; the sequence is PASASPKPVGVVSAP. Over residues 679–689 the composition is skewed to basic and acidic residues; that stretch reads AVEDPRSRGNS. Phosphoserine occurs at positions 685 and 689. The segment covering 690–701 has biased composition (low complexity); the sequence is DTDSATSASSNS. Residues Ser-885, Ser-886, and Ser-887 each carry the phosphoserine modification. A disordered region spans residues 901–928; the sequence is SKPQKKVQSKPKNKTQNRGRSSLGAVGQ. Basic residues predominate over residues 903–917; it reads PQKKVQSKPKNKTQN.

Post-translationally, the N-terminus is blocked. As to expression, oocyte specific.

The protein resides in the nucleus. It is found in the nucleoplasm. Its subcellular location is the chromosome. The protein localises to the centromere. It localises to the kinetochore. Its function is as follows. May play a key role in egg organization. May be a transcriptional regulator having a role in chromatin remodeling in concert with Hira, a histone chaperone. Involved in chromosome segregation by affecting kinetochores function in the first meiotic division. In Drosophila melanogaster (Fruit fly), this protein is yemanuclein.